The primary structure comprises 2275 residues: Multifunctional protein pyrABCN (2275 aa).

A GATase (Glutamine amidotransferase) region spans residues 1–440; the sequence is MPETVGHEEP…PGPRDTEYLF (440 aa). Positions 102, 313, and 315 each coordinate L-glutamine. Residues 265-453 form the Glutamine amidotransferase type-1 domain; sequence RVLCLDVGLK…INAIKDTIAS (189 aa). Cys-342 functions as the Nucleophile; for GATase activity in the catalytic mechanism. Residues Leu-343, Gln-346, Asn-384, Gly-386, and Tyr-387 each coordinate L-glutamine. Catalysis depends on for GATase activity residues His-426 and Glu-428. The linker stretch occupies residues 441 to 482; that stretch reads DVFINAIKDTIASPEALQKPVNFPGGAVAENIKASPRVSVKK. Positions 483–1522 are CPSase (Carbamoyl-phosphate synthase); that stretch reads VLILGSGGLS…TNVKNAKILI (1040 aa). 12 residues coordinate ATP: Arg-600, Arg-640, Gly-646, Gly-647, Arg-677, Met-679, Glu-684, Gly-710, Ile-711, His-712, Gln-753, and Glu-767. 2 ATP-grasp domains span residues 604-796 and 1139-1330; these read ARSM…KLGL and SRML…KAMI. Mg(2+) is bound by residues Gln-753, Glu-767, and Asn-769. Mn(2+)-binding residues include Gln-753, Glu-767, and Asn-769. Arg-1175, Lys-1214, Ile-1216, Glu-1221, Gly-1246, Val-1247, His-1248, Ser-1249, Gln-1289, and Glu-1301 together coordinate ATP. Gln-1289, Glu-1301, and Asn-1303 together coordinate Mg(2+). Positions 1289, 1301, and 1303 each coordinate Mn(2+). One can recognise an MGS-like domain in the interval 1396–1575; sequence FKLPKRNILL…KDFEAVTKAS (180 aa). The linker stretch occupies residues 1523-1532; it reads EAIARHYALN. Residues 1533–1862 are defective DHOase domain; that stretch reads VQTIDYQTSH…FQGKTSCLDS (330 aa). A disordered region spans residues 1863-1882; the sequence is EITPDAPKGSDMSGHRIVPA. The linker stretch occupies residues 1863–1953; it reads EITPDAPKGS…LQMLSRSPFK (91 aa). Residues 1954 to 2258 form an ATCase (Aspartate transcarbamylase) region; the sequence is QKHVLSVNQF…EFDMLMWMQM (305 aa). Carbamoyl phosphate is bound by residues Arg-2006 and Thr-2007. Lys-2034 is an L-aspartate binding site. 3 residues coordinate carbamoyl phosphate: Arg-2055, His-2083, and Gln-2086. Positions 2116 and 2178 each coordinate L-aspartate. Carbamoyl phosphate contacts are provided by Leu-2217 and Pro-2218.

The protein in the central section; belongs to the metallo-dependent hydrolases superfamily. DHOase family. CAD subfamily. This sequence in the N-terminal section; belongs to the CarA family. It in the 2nd section; belongs to the CarB family. In the 3rd section; belongs to the metallo-dependent hydrolases superfamily. DHOase family. CAD subfamily. The protein in the C-terminal section; belongs to the aspartate/ornithine carbamoyltransferase superfamily. ATCase family. The cofactor is Mg(2+). Requires Mn(2+) as cofactor.

The catalysed reaction is hydrogencarbonate + L-glutamine + 2 ATP + H2O = carbamoyl phosphate + L-glutamate + 2 ADP + phosphate + 2 H(+). It catalyses the reaction L-glutamine + H2O = L-glutamate + NH4(+). The enzyme catalyses hydrogencarbonate + NH4(+) + 2 ATP = carbamoyl phosphate + 2 ADP + phosphate + 2 H(+). It carries out the reaction carbamoyl phosphate + L-aspartate = N-carbamoyl-L-aspartate + phosphate + H(+). Its pathway is pyrimidine metabolism; UMP biosynthesis via de novo pathway; (S)-dihydroorotate from bicarbonate: step 1/3. It functions in the pathway pyrimidine metabolism; UMP biosynthesis via de novo pathway; (S)-dihydroorotate from bicarbonate: step 2/3. Multifunctional protein that encodes the first 2 enzymatic activities of the de novo pyrimidine pathway: carbamoylphosphate synthetase (CPSase; EC 6.3.5.5) and aspartate transcarbamylase (ATCase; EC 2.1.3.2). The CPSase-function is accomplished in 2 steps, by a glutamine-dependent amidotransferase activity (GATase) that binds and cleaves glutamine to produce ammonia, followed by an ammonium-dependent carbamoyl phosphate synthetase, which reacts with the ammonia, hydrogencarbonate and ATP to form carbamoyl phosphate. The endogenously produced carbamoyl phosphate is sequestered and channeled to the ATCase active site. ATCase then catalyzes the formation of carbamoyl-L-aspartate from L-aspartate and carbamoyl phosphate. The protein is Multifunctional protein pyrABCN of Emericella nidulans (strain FGSC A4 / ATCC 38163 / CBS 112.46 / NRRL 194 / M139) (Aspergillus nidulans).